The chain runs to 87 residues: Defensin-like protein 218 (87 aa).

An N-terminal signal peptide occupies residues 1-19; the sequence is MKTIVCFLTILILVSSCES. Disulfide bonds link Cys-51–Cys-70, Cys-54–Cys-75, and Cys-58–Cys-77.

It belongs to the DEFL family.

The protein localises to the secreted. This chain is Defensin-like protein 218, found in Arabidopsis thaliana (Mouse-ear cress).